A 359-amino-acid chain; its full sequence is UDP-3-O-acylglucosamine N-acyltransferase (359 aa).

The active-site Proton acceptor is the histidine 247.

This sequence belongs to the transferase hexapeptide repeat family. LpxD subfamily. As to quaternary structure, homotrimer.

The enzyme catalyses a UDP-3-O-[(3R)-3-hydroxyacyl]-alpha-D-glucosamine + a (3R)-hydroxyacyl-[ACP] = a UDP-2-N,3-O-bis[(3R)-3-hydroxyacyl]-alpha-D-glucosamine + holo-[ACP] + H(+). Its pathway is bacterial outer membrane biogenesis; LPS lipid A biosynthesis. In terms of biological role, catalyzes the N-acylation of UDP-3-O-acylglucosamine using 3-hydroxyacyl-ACP as the acyl donor. Is involved in the biosynthesis of lipid A, a phosphorylated glycolipid that anchors the lipopolysaccharide to the outer membrane of the cell. The chain is UDP-3-O-acylglucosamine N-acyltransferase from Chlorobium chlorochromatii (strain CaD3).